A 2726-amino-acid chain; its full sequence is Filamin-C (2726 aa).

The segment at 1-260 (MMNNSNYSDA…VMTYLSQFPK (260 aa)) is actin-binding. The residue at position 5 (S5) is a Phosphoserine. Calponin-homology (CH) domains follow at residues 37–143 (KIQQ…LHYS) and 160–263 (QTPK…KAKL). 15 Filamin repeats span residues 271-369 (SKQL…EVNV), 371-469 (MALG…PVHV), 470-566 (AEAC…EVQV), 567-659 (SPEA…IAHI), 663-759 (PPDC…RVNV), 760-862 (GEGS…HIKV), 863-961 (DPSH…VVNV), 962-1057 (APPL…AVEG), 1058-1150 (VLPP…KATI), 1151-1245 (QPVF…RVHV), 1246-1345 (QPAV…RVGV), 1346-1438 (TEGC…RVPV), 1439-1534 (KDVV…KIKV), 1535-1631 (LPAH…RIHA), and 1636-1735 (DASK…HVLA). Omega-N-methylarginine is present on R1003. Phosphoserine is present on residues S1162 and S1339. The segment at 1736–1759 (CDPLPHVEEPAEVLQLHQPYAPLR) is hinge 1. 4 Filamin repeats span residues 1760 to 1854 (PGTC…LQFY), 1855 to 1947 (VDAI…TAKI), 1948 to 2034 (TGDD…KILV), and 2037 to 2129 (SEIG…TVKV). S2043 bears the Phosphoserine mark. Residues 2163-2244 (GNWFQMVSAQ…FGSITRQQEG (82 aa)) are intradomain insert; mediate targeting to Z lines. The segment covering 2194–2210 (ISKTRGGETKREVRVEE) has biased composition (basic and acidic residues). The disordered stretch occupies residues 2194-2214 (ISKTRGGETKREVRVEESTQV). Residues S2234 and S2237 each carry the phosphoserine modification. T2239 bears the Phosphothreonine mark. Positions 2241–2260 (QQEGEASSQDMTAQVTSPSG) are enriched in polar residues. A disordered region spans residues 2241-2261 (QQEGEASSQDMTAQVTSPSGK). A Filamin 20; mediates interaction with XIRP1 repeat occupies 2245 to 2307 (EASSQDMTAQ…VPGSPFQFTV (63 aa)). 3 Filamin repeats span residues 2310-2402 (LGEG…VVPV), 2404-2497 (SLSD…KIRV), and 2501-2593 (SQAG…KAKV). The interval 2404-2725 (SLSDDARRLT…VPGSPFKVNV (322 aa)) is interaction with INPPL1. S2587, S2618, S2621, S2633, S2715, and S2719 each carry phosphoserine. The segment at 2594–2630 (TGPRLSGGHSLHETSTVLVETVTKSSSSRGASYSSIP) is hinge 2. Positions 2594-2726 (TGPRLSGGHS…PGSPFKVNVP (133 aa)) are self-association site, tail. The Filamin 24 repeat unit spans residues 2631 to 2725 (KFSSDASKVV…VPGSPFKVNV (95 aa)).

The protein belongs to the filamin family. In terms of assembly, homodimer; the filamin repeat 24 and the second hinge domain are important for dimer formation. Interacts with FLNB, KCND2, INPPL1, ITGB1A, MYOT, MYOZ1 and MYOZ3. Interacts with sarcoglycans SGCD and SGCG. Interacts (via filament repeats 17-18, 20-21 and 24) with USP25 (isoform USP25m only). Interacts with FBLIM1. Interacts with KY. Interacts with IGFN1. Interacts with MICALL2. Interacts with XIRP1; this interaction is mediated by filamin 20 repeat. Interacts with ANK3. Interacts with SYNPO2. In terms of processing, ubiquitinated by FBXL22, leading to proteasomal degradation.

It is found in the cytoplasm. The protein resides in the membrane. Its subcellular location is the cytoskeleton. The protein localises to the myofibril. It localises to the sarcomere. It is found in the z line. In terms of biological role, muscle-specific filamin, which plays a central role in sarcomere assembly and organization. Critical for normal myogenesis, it probably functions as a large actin-cross-linking protein with structural functions at the Z lines in muscle cells. May be involved in reorganizing the actin cytoskeleton in response to signaling events. This chain is Filamin-C (Flnc), found in Rattus norvegicus (Rat).